The sequence spans 428 residues: Transcription factor bHLH91 (428 aa).

The bHLH domain maps to lysine 210–leucine 259. The disordered stretch occupies residues arginine 278–cysteine 320. The span at glycine 297–asparagine 307 shows a compositional bias: acidic residues.

As to quaternary structure, homodimer. In terms of tissue distribution, flowers.

The protein resides in the nucleus. The sequence is that of Transcription factor bHLH91 (BHLH91) from Arabidopsis thaliana (Mouse-ear cress).